A 287-amino-acid chain; its full sequence is Short-chain dehydrogenase virD (287 aa).

Residues V10, T36, D57, N85, Y149, K153, V182, and T184 each contribute to the NADP(+) site. Y149 functions as the Proton acceptor in the catalytic mechanism. K153 acts as the Lowers pKa of active site Tyr in catalysis.

The protein belongs to the short-chain dehydrogenases/reductases (SDR) family.

It functions in the pathway secondary metabolite biosynthesis. Its function is as follows. Short-chain dehydrogenase; part of the gene cluster that mediates the biosynthesis of virensols and trichoxide, fungal natural products that contain or are derived from a salicylaldehyde core. The pathway begins with the synthesis of the reduced chain in virensol C by the highly reducing polyketide synthase virA via condensation of one acetate and 8 malonate units. VirA has interesting programming rules since the first 2 ketides are fully reduced, the 3 following ketides undergo beta-dehydration, and the last 3 ketides are only reduced to beta-hydroxys to yield the trihydroxy portion. The production of aldehyde virensol C by virA alone is surprising, since virA does not contain a reductase (R) domain that is typically associated with reductive product release in HRPKS. The cupin-domain enzyme virC is involved in enhancing virA product turnover. The short-chain dehydrogenase virB then oxidizes the C-7 alcohol of virensol C to a ketone, yielding virensol D. Virensol D is further transformed to salicylaldehyde 5-deoxyaurocitrin by the short-chain dehydrogenase virD. VirD catalyzes the dehydrogenation of C-3 to form the beta-ketone aldehyde, which is followed by the generation of the nucleophilic C-2 that is required for the intramolecular aldol condensation between C-2 and C-7, itself followed by dehydration and aromatization which leads to salicylaldehyde 5-deoxyaurocitrin. While the dehydrogenation of virensol D is definitely catalyzed by virD, the aldol condensation and dehydration may be uncatalyzed or assisted by virD. The short chain dehydrogenase virG then converts salicylaldehyde 5-deoxyaurocitrin into virensol B which is further hydroxylated by the cytochrome P450 monooxygenase virE to yield the hydroquinone virensol A. VirI then may oxidize virensol A to form the quinone, while virH performs the epoxidation. Finally, the two remaining short-chain dehydrogenases, virK and virL, are probably responsible for reducing the ketones to the corresponding alcohols to furnish the epoxycyclohexanol structure in trichoxide. The protein is Short-chain dehydrogenase virD of Hypocrea virens (strain Gv29-8 / FGSC 10586) (Gliocladium virens).